We begin with the raw amino-acid sequence, 282 residues long: Acetylglutamate kinase (282 aa).

Substrate-binding positions include 62 to 63 (GG), Arg84, and Asn178.

It belongs to the acetylglutamate kinase family. ArgB subfamily.

It localises to the cytoplasm. It carries out the reaction N-acetyl-L-glutamate + ATP = N-acetyl-L-glutamyl 5-phosphate + ADP. Its pathway is amino-acid biosynthesis; L-arginine biosynthesis; N(2)-acetyl-L-ornithine from L-glutamate: step 2/4. Catalyzes the ATP-dependent phosphorylation of N-acetyl-L-glutamate. The protein is Acetylglutamate kinase of Kosmotoga olearia (strain ATCC BAA-1733 / DSM 21960 / TBF 19.5.1).